The primary structure comprises 463 residues: Argininosuccinate lyase (463 aa).

This sequence belongs to the lyase 1 family. Argininosuccinate lyase subfamily.

The protein localises to the cytoplasm. The catalysed reaction is 2-(N(omega)-L-arginino)succinate = fumarate + L-arginine. The protein operates within amino-acid biosynthesis; L-arginine biosynthesis; L-arginine from L-ornithine and carbamoyl phosphate: step 3/3. The polypeptide is Argininosuccinate lyase (Chlorobaculum parvum (strain DSM 263 / NCIMB 8327) (Chlorobium vibrioforme subsp. thiosulfatophilum)).